The chain runs to 511 residues: Cobyric acid synthase (511 aa).

Residues 251–443 form the GATase cobBQ-type domain; sequence LLDIAIICLP…IHGIFDNDVF (193 aa). C332 functions as the Nucleophile in the catalytic mechanism. The active site involves H435.

It belongs to the CobB/CobQ family. CobQ subfamily.

It functions in the pathway cofactor biosynthesis; adenosylcobalamin biosynthesis. Functionally, catalyzes amidations at positions B, D, E, and G on adenosylcobyrinic A,C-diamide. NH(2) groups are provided by glutamine, and one molecule of ATP is hydrogenolyzed for each amidation. The chain is Cobyric acid synthase from Listeria monocytogenes serovar 1/2a (strain ATCC BAA-679 / EGD-e).